A 385-amino-acid chain; its full sequence is Glucans biosynthesis protein C (385 aa).

The next 10 helical transmembrane spans lie at 17–39, 54–76, 88–110, 136–158, 179–198, 213–235, 242–261, 276–295, 308–330, and 334–356; these read AWLM…TWHV, FIHS…MLFL, VERV…FIML, LISH…WIFK, LSVI…RTIF, IVMQ…IFPH, TPSR…YLLN, SVIT…SFGH, FVNA…GAYI, and ITSN…IILY.

It belongs to the acyltransferase 3 family. OpgC subfamily.

The protein resides in the cell membrane. Its pathway is glycan metabolism; osmoregulated periplasmic glucan (OPG) biosynthesis. In terms of biological role, necessary for the succinyl substitution of periplasmic glucans. Could catalyze the transfer of succinyl residues from the cytoplasmic side of the membrane to the nascent glucan backbones on the periplasmic side of the membrane. The polypeptide is Glucans biosynthesis protein C (Escherichia coli O157:H7).